The primary structure comprises 428 residues: Gamma-glutamyl phosphate reductase (428 aa).

The protein belongs to the gamma-glutamyl phosphate reductase family.

The protein localises to the cytoplasm. It carries out the reaction L-glutamate 5-semialdehyde + phosphate + NADP(+) = L-glutamyl 5-phosphate + NADPH + H(+). It functions in the pathway amino-acid biosynthesis; L-proline biosynthesis; L-glutamate 5-semialdehyde from L-glutamate: step 2/2. Catalyzes the NADPH-dependent reduction of L-glutamate 5-phosphate into L-glutamate 5-semialdehyde and phosphate. The product spontaneously undergoes cyclization to form 1-pyrroline-5-carboxylate. This Treponema pallidum (strain Nichols) protein is Gamma-glutamyl phosphate reductase.